Here is a 24-residue protein sequence, read N- to C-terminus: Major pollen allergen Ole e 4 (24 aa).

The protein belongs to the glycosyl hydrolase 17 family. In terms of processing, the N-terminus is blocked.

This chain is Major pollen allergen Ole e 4, found in Olea europaea (Common olive).